Reading from the N-terminus, the 313-residue chain is MTQLGFLLFIMIATRVCSAAEENLDTNRWGNSFFSSLPRSCKEIKQEDTKAQDGLYFLRTENGVIYQTFCDMTTAGGGWTLVASVHENNLRGRCTVGDRWSSQQGNRADYPEGDGNWANYNTFGSAEGATSDDYKNPGYFDIQAENLGIWHVPNNSPLHTWRNSSLLRYRTFTGFLQRLGHNLFGLYQKYPVKYGEGKCWTDNGPAFPVVYDFGDAQKTASYYSPSGRNEFTAGYVQFRVFNNERAASALCAGVRVTGCNTEHHCIGGGGFFPEFDPEECGDFAAFDANGYGTHIRYSNSREITEAAVLLFYR.

Residues 1–19 (MTQLGFLLFIMIATRVCSA) form the signal peptide. The 220-residue stretch at 32–251 (SFFSSLPRSC…NNERAASALC (220 aa)) folds into the Fibrinogen C-terminal domain. Cysteine 41 and cysteine 70 are disulfide-bonded. Positions 86, 87, 89, 92, 97, 98, and 133 each coordinate Ca(2+). Intrachain disulfides connect cysteine 94–cysteine 280, cysteine 199–cysteine 259, and cysteine 251–cysteine 265. A glycan (N-linked (GlcNAc...) asparagine) is linked at asparagine 163. 4 residues coordinate Ca(2+): asparagine 260, glutamate 262, glutamate 274, and aspartate 282. A carbohydrate-binding positions include 262–263 (EH) and glutamate 274. The GPI-anchor amidated serine moiety is linked to residue serine 298. Positions 299-313 (NSREITEAAVLLFYR) are excised as a propeptide.

Expressed in the globlet and Paneth cells of the small intestine of infected mice. Expressed in the ileum of uninfected mice.

The protein resides in the cell membrane. It is found in the secreted. In terms of biological role, may play a protective role in the innate immune response to parasite infection. This is Intelectin-1b (Itln1b) from Mus musculus (Mouse).